The sequence spans 219 residues: HTH-type transcriptional regulator LutR (219 aa).

Residues 1 to 56 (MIKNGELKPGDKLDSVQALAESFQVSRSAVREALSALKAMGLVEMKQGEGTYLKEF) form the HTH gntR-type domain. The H-T-H motif DNA-binding region spans 16 to 35 (VQALAESFQVSRSAVREALS).

In terms of biological role, negatively regulates the transcription of the lutABC operon, which is required for L-lactate utilization. LutR activity is regulated by lactate, since presence of L-lactate, that probably binds to LutR, leads to derepression of the operon. Also appears to be essential for bacilysin biosynthesis. The protein is HTH-type transcriptional regulator LutR (lutR) of Bacillus subtilis (strain 168).